We begin with the raw amino-acid sequence, 1754 residues long: Probable outer membrane protein PmpB (1754 aa).

The signal sequence occupies residues Met1–Ala14. Composition is skewed to low complexity over residues Asn68–Pro105 and Ser212–Ser232. Disordered regions lie at residues Asn68–Gly109, Ser190–Glu235, Pro252–Gly271, Asn397–Lys438, Ala621–Ser668, and Thr1299–Pro1332. Composition is skewed to polar residues over residues Pro252–Ser264 and Ala402–Ala412. Low complexity-rich tracts occupy residues Thr413–Ser427, Pro636–Ser668, Thr1299–Ser1311, and Ser1320–Pro1332. The Autotransporter domain occupies Asp1461–Phe1754.

The protein belongs to the PMP outer membrane protein family.

The protein resides in the secreted. It is found in the cell wall. It localises to the cell outer membrane. The sequence is that of Probable outer membrane protein PmpB (pmpB) from Chlamydia trachomatis serovar D (strain ATCC VR-885 / DSM 19411 / UW-3/Cx).